The sequence spans 61 residues: MAKKSLVVKSERPAKFSTQTYTRCERCGRPHSVYRKFHLCRICLRELAHEGQIPGMKKASW.

Residues C24, C27, C40, and C43 each coordinate Zn(2+).

Belongs to the universal ribosomal protein uS14 family. Zinc-binding uS14 subfamily. In terms of assembly, part of the 30S ribosomal subunit. Contacts proteins S3 and S10. Zn(2+) serves as cofactor.

In terms of biological role, binds 16S rRNA, required for the assembly of 30S particles and may also be responsible for determining the conformation of the 16S rRNA at the A site. This chain is Small ribosomal subunit protein uS14B, found in Pediococcus pentosaceus (strain ATCC 25745 / CCUG 21536 / LMG 10740 / 183-1w).